Consider the following 691-residue polypeptide: DNA ligase (691 aa).

NAD(+) contacts are provided by residues 41 to 45, 90 to 91, and glutamate 130; these read DAEYD and SL. Lysine 132 functions as the N6-AMP-lysine intermediate in the catalytic mechanism. Residues arginine 153, glutamate 190, lysine 307, and lysine 331 each coordinate NAD(+). The Zn(2+) site is built by cysteine 425, cysteine 428, cysteine 443, and cysteine 449. The 82-residue stretch at 610–691 folds into the BRCT domain; sequence APQGVLAGKT…LHQLLEGNTP (82 aa).

Belongs to the NAD-dependent DNA ligase family. LigA subfamily. Mg(2+) is required as a cofactor. Mn(2+) serves as cofactor.

It carries out the reaction NAD(+) + (deoxyribonucleotide)n-3'-hydroxyl + 5'-phospho-(deoxyribonucleotide)m = (deoxyribonucleotide)n+m + AMP + beta-nicotinamide D-nucleotide.. In terms of biological role, DNA ligase that catalyzes the formation of phosphodiester linkages between 5'-phosphoryl and 3'-hydroxyl groups in double-stranded DNA using NAD as a coenzyme and as the energy source for the reaction. It is essential for DNA replication and repair of damaged DNA. This Burkholderia lata (strain ATCC 17760 / DSM 23089 / LMG 22485 / NCIMB 9086 / R18194 / 383) protein is DNA ligase.